We begin with the raw amino-acid sequence, 169 residues long: uncharacterized protein (169 aa).

2 helical membrane-spanning segments follow: residues 10–30 (NVHM…FKLI) and 149–169 (IPLA…LLIP).

It is found in the membrane. This is an uncharacterized protein from Dictyostelium discoideum (Social amoeba).